A 158-amino-acid chain; its full sequence is Small ribosomal subunit protein uS9 (158 aa).

The protein belongs to the universal ribosomal protein uS9 family.

This is Small ribosomal subunit protein uS9 from Rhodopseudomonas palustris (strain BisA53).